Reading from the N-terminus, the 871-residue chain is Translation initiation factor IF-2 (871 aa).

The disordered stretch occupies residues 1–242; the sequence is MVDTKNPGDK…PAAKPAPAKQ (242 aa). The segment covering 68 to 91 has biased composition (low complexity); it reads PASARTPAAKAPPARAATPAAPRA. The span at 115-174 shows a compositional bias: basic and acidic residues; it reads AKVRAEEERRIAEAEAARRNSKEGIEQAEREAAEARRKAEEERHRQEEEAKRKAEIEAKR. Low complexity-rich tracts occupy residues 182-206 and 225-241; these read KPAP…AVAA and ARPV…APAK. One can recognise a tr-type G domain in the interval 367-538; sequence PRSPVVTVMG…SLQADLLDLK (172 aa). The interval 376-383 is G1; that stretch reads GHVDHGKT. GTP is bound at residue 376 to 383; that stretch reads GHVDHGKT. The G2 stretch occupies residues 401–405; sequence GITQH. The G3 stretch occupies residues 424–427; that stretch reads DTPG. Residues 424–428 and 478–481 each bind GTP; these read DTPGH and NKID. The segment at 478–481 is G4; the sequence is NKID. Positions 514–516 are G5; it reads SAK.

This sequence belongs to the TRAFAC class translation factor GTPase superfamily. Classic translation factor GTPase family. IF-2 subfamily.

Its subcellular location is the cytoplasm. Functionally, one of the essential components for the initiation of protein synthesis. Protects formylmethionyl-tRNA from spontaneous hydrolysis and promotes its binding to the 30S ribosomal subunits. Also involved in the hydrolysis of GTP during the formation of the 70S ribosomal complex. The polypeptide is Translation initiation factor IF-2 (Nitrobacter winogradskyi (strain ATCC 25391 / DSM 10237 / CIP 104748 / NCIMB 11846 / Nb-255)).